The chain runs to 317 residues: Beta-ketoacyl-[acyl-carrier-protein] synthase III (317 aa).

Catalysis depends on residues C112 and H244. Residues 245-249 form an ACP-binding region; that stretch reads QANLR. N274 is an active-site residue.

Belongs to the thiolase-like superfamily. FabH family. Homodimer.

It is found in the cytoplasm. The catalysed reaction is malonyl-[ACP] + acetyl-CoA + H(+) = 3-oxobutanoyl-[ACP] + CO2 + CoA. Its pathway is lipid metabolism; fatty acid biosynthesis. In terms of biological role, catalyzes the condensation reaction of fatty acid synthesis by the addition to an acyl acceptor of two carbons from malonyl-ACP. Catalyzes the first condensation reaction which initiates fatty acid synthesis and may therefore play a role in governing the total rate of fatty acid production. Possesses both acetoacetyl-ACP synthase and acetyl transacylase activities. Its substrate specificity determines the biosynthesis of branched-chain and/or straight-chain of fatty acids. The protein is Beta-ketoacyl-[acyl-carrier-protein] synthase III of Salmonella paratyphi A (strain ATCC 9150 / SARB42).